Consider the following 679-residue polypeptide: Sodium-dependent phosphate transporter 1 (679 aa).

6 helical membrane passes run 21 to 41, 62 to 82, 100 to 120, 158 to 178, 203 to 223, and 230 to 250; these read YLWMLILGFIIAFVLAFSVGA, ACILASIFETVGSVLLGAKVS, GLLMAGSVSAMFGSAVWQLVA, IVMSWFVSPLLSGIMSGILFF, ACTVGINLFSIMYTGAPLLGF, and GTILISVGCAVFCALIVWFFV. Ser265 and Ser269 each carry phosphoserine. A disordered region spans residues 268–288; the sequence is ESPLMEKKNSLKEDHEETKLS. Residues 271–286 show a composition bias toward basic and acidic residues; it reads LMEKKNSLKEDHEETK. 4 helical membrane-spanning segments follow: residues 511-531, 558-578, 600-620, and 650-670; these read VSLLFQFLQILTACFGSFAHG, VATPIWLLLYGGVGICIGLWV, FSIELASALTVVIASNIGLPI, and IFMAWFVTVPISGVISAAIMA. An a region spans residues 550–558; it reads DTGDVSSKV.

It belongs to the inorganic phosphate transporter (PiT) (TC 2.A.20) family.

The protein resides in the cell membrane. It carries out the reaction 2 Na(+)(out) + phosphate(out) = 2 Na(+)(in) + phosphate(in). In terms of biological role, sodium-phosphate symporter which preferentially transports the monovalent form of phosphate with a stoichiometry of two sodium ions per phosphate ion. May play a role in extracellular matrix and cartilage calcification as well as in vascular calcification. Essential for cell proliferation but this function is independent of its phosphate transporter activity. The polypeptide is Sodium-dependent phosphate transporter 1 (SLC20A1) (Pongo abelii (Sumatran orangutan)).